We begin with the raw amino-acid sequence, 594 residues long: MATLSLPLPHLTQAIPARARPRPRPLRGIPARLLSCRAAMAVAPDKEEAAAVALDKAVKVAVAAPDRAAVAAVGVGEELPEGYDQMMPAVEEARRRRAGVLLHPTSLRGPHGIGDLGDEAVAFLAWLRDAGCTLWQVLPLVPPGRKSGEDGSPYSGQDANCGNTLLISLEELVKDGLLMENELPDPLDMEYVEFDTVANLKEPLIAKAAERLLLSRGELRTQYDCFKKNPNISGWLEDAALFAAIDRSIDALSWYEWPEPLKNRHLRALEDIYQKQKDFIEIFMAQQFLFQRQWQRIRKYAKKLGISIMGDMPIYVGYHSADVWANRKSFLLDKNGFPTFVSGVPPDAFSETGQLWNSPLYDWKAMEAGGFEWWIKRINRALDLYDEFRIDHFRGLAGFWAVPSESKVALVGSWRAGPRNAFFDALFKAVGRINIIAEDLGVITEDVVDLRKSIEAPGMAVLQFAFGGGSDNPHLPHNHEFDQVVYTGTHDNDTVIGWWQTLPEEEKQTVFKYLPEANRTEISWALITAALSSVARTSMVTMQDILGLDSSARMNTPATQKGNWRWRMPSSVSFDSLSPEAAKLKELLGLYNRL.

The N-terminal 37 residues, 1–37, are a transit peptide targeting the chloroplast; the sequence is MATLSLPLPHLTQAIPARARPRPRPLRGIPARLLSCR.

The protein belongs to the disproportionating enzyme family.

The protein localises to the plastid. Its subcellular location is the chloroplast. The protein resides in the amyloplast. The enzyme catalyses Transfers a segment of a (1-&gt;4)-alpha-D-glucan to a new position in an acceptor, which may be glucose or a (1-&gt;4)-alpha-D-glucan.. Functionally, chloroplastic alpha-glucanotransferase involved in maltotriose metabolism. In Oryza sativa subsp. japonica (Rice), this protein is 4-alpha-glucanotransferase DPE1, chloroplastic/amyloplastic (DPE1).